We begin with the raw amino-acid sequence, 871 residues long: Isoleucine--tRNA ligase (871 aa).

The short motif at Pro-57–His-67 is the 'HIGH' region element. An L-isoleucyl-5'-AMP-binding site is contributed by Glu-554. A 'KMSKS' region motif is present at residues Lys-595–Ser-599. Position 598 (Lys-598) interacts with ATP.

It belongs to the class-I aminoacyl-tRNA synthetase family. IleS type 1 subfamily. As to quaternary structure, monomer.

It is found in the cytoplasm. It catalyses the reaction tRNA(Ile) + L-isoleucine + ATP = L-isoleucyl-tRNA(Ile) + AMP + diphosphate. Functionally, catalyzes the attachment of isoleucine to tRNA(Ile). As IleRS can inadvertently accommodate and process structurally similar amino acids such as valine, to avoid such errors it has two additional distinct tRNA(Ile)-dependent editing activities. One activity is designated as 'pretransfer' editing and involves the hydrolysis of activated Val-AMP. The other activity is designated 'posttransfer' editing and involves deacylation of mischarged Val-tRNA(Ile). The sequence is that of Isoleucine--tRNA ligase from Staphylococcus epidermidis.